A 383-amino-acid chain; its full sequence is MSLKNLTHALFTERFGYAPTLTIQAPGRVNLIGEHTDYNDGFVLPCAIDYQTVIACAKRDDRQIRVIAADYEGQQDQFSLDSPIVSHPDQRWSDYVRGVIKHLQQRNADFGGADLVISGNVPQGAGLSSSASLEVAVGQAMQALYALPLDGVALALNGQEAENQFVGCNCGIMDQLISALGEKDHALLIDCRTLETRAVSVPEDIAVVIINSNVKRGLVDSEYNTRREQCEEAARFFGVKALRDVSPDLFFPIQHELDPIVAKRARHVISENDRTLAAADALAAGDMKLMGKLMAESHVSMRDDFEITVPPIDRLVEIVKSVIGDRGGVRMTGGGFGGCIVALMPLALVEPVRAAVAREYPLQTNGLKETFYVCKASEGAGTC.

Residue 34-37 (EHTD) coordinates substrate. Residue 124–130 (GAGLSSS) coordinates ATP. Mg(2+) contacts are provided by Ser-130 and Glu-162. Asp-174 serves as the catalytic Proton acceptor. Tyr-223 provides a ligand contact to substrate.

It belongs to the GHMP kinase family. GalK subfamily.

The protein resides in the cytoplasm. It catalyses the reaction alpha-D-galactose + ATP = alpha-D-galactose 1-phosphate + ADP + H(+). It functions in the pathway carbohydrate metabolism; galactose metabolism. Its function is as follows. Catalyzes the transfer of the gamma-phosphate of ATP to D-galactose to form alpha-D-galactose-1-phosphate (Gal-1-P). The polypeptide is Galactokinase (Serratia proteamaculans (strain 568)).